A 434-amino-acid chain; its full sequence is N-acylneuraminate cytidylyltransferase (434 aa).

The residue at position 1 (Met1) is an N-acetylmethionine. Residues Met1–Pro42 form a disordered region. A BC1 motif motif is present at residues Pro15–Ser31. Omega-N-methylarginine occurs at positions 37 and 52. Arg52, Asn62, Arg111, Ser120, Ser122, and Gln143 together coordinate substrate. The short motif at Lys200–Asp206 is the BC2 motif element. Residue Arg201 is part of the active site. The short motif at Lys269–Lys276 is the BC3 motif element.

The protein belongs to the CMP-NeuNAc synthase family. As to quaternary structure, homotetramer; the active enzyme is formed by a dimer of dimers.

The protein localises to the nucleus. The enzyme catalyses an N-acylneuraminate + CTP = a CMP-N-acyl-beta-neuraminate + diphosphate. Its pathway is amino-sugar metabolism; N-acetylneuraminate metabolism. Catalyzes the activation of N-acetylneuraminic acid (NeuNAc) to cytidine 5'-monophosphate N-acetylneuraminic acid (CMP-NeuNAc), a substrate required for the addition of sialic acid. Has some activity toward NeuNAc, N-glycolylneuraminic acid (Neu5Gc) or 2-keto-3-deoxy-D-glycero-D-galacto-nononic acid (KDN). In Bos taurus (Bovine), this protein is N-acylneuraminate cytidylyltransferase (CMAS).